The chain runs to 1331 residues: Receptor-type adenylate cyclase B (1331 aa).

Over 1–33 (MYADATHPRRACWCGAGGVSGCVRQRHAYRCSR) the chain is Cytoplasmic. The helical transmembrane segment at 34-54 (LLAGVLLIVGALTLTLAVSTV) threads the bilayer. Topologically, residues 55–898 (PAAWAAGAVA…SHALTPAQRG (844 aa)) are extracellular. N255, N429, N558, N574, and N657 each carry an N-linked (GlcNAc...) asparagine glycan. A helical transmembrane segment spans residues 899-919 (GAIAGIALLTVILLAVAGLAL). The Cytoplasmic portion of the chain corresponds to 920-1331 (YCCMDNRNND…PTVCNVRGAH (412 aa)). One can recognise a Guanylate cyclase domain in the interval 940–1094 (TLLFTDIESS…DTSNMAARTE (155 aa)). Positions 945 and 988 each coordinate Mg(2+).

This sequence belongs to the adenylyl cyclase class-3 family. It depends on Mg(2+) as a cofactor.

Its subcellular location is the membrane. The catalysed reaction is ATP = 3',5'-cyclic AMP + diphosphate. In terms of biological role, could act as a receptor for an unknown ligand. The protein is Receptor-type adenylate cyclase B (RAC-B) of Leishmania donovani.